Consider the following 248-residue polypeptide: DNA polymerase sliding clamp (248 aa).

This sequence belongs to the PCNA family. As to quaternary structure, homotrimer. The subunits circularize to form a toroid; DNA passes through its center. Replication factor C (RFC) is required to load the toroid on the DNA.

Sliding clamp subunit that acts as a moving platform for DNA processing. Responsible for tethering the catalytic subunit of DNA polymerase and other proteins to DNA during high-speed replication. This is DNA polymerase sliding clamp from Cenarchaeum symbiosum (strain A).